The following is a 295-amino-acid chain: 15-cis-phytoene synthase (295 aa).

It belongs to the phytoene/squalene synthase family. ATP serves as cofactor. The cofactor is Mn(2+).

The catalysed reaction is 2 (2E,6E,10E)-geranylgeranyl diphosphate = 15-cis-phytoene + 2 diphosphate. It functions in the pathway carotenoid biosynthesis; phytoene biosynthesis. Its activity is regulated as follows. Significant inhibition is seen at GGPP concentrations above 100 uM. In terms of biological role, involved in the biosynthesis of carotenoids. Catalyzes stereoselectively the condensation of two molecules of geranylgeranyl diphosphate (GGPP) to give prephytoene diphosphate (PPPP) and the subsequent rearrangement of the cyclopropylcarbinyl intermediate to yield 15-cis-phytoene. This chain is 15-cis-phytoene synthase (crtB), found in Enterobacter agglomerans (Erwinia herbicola).